Consider the following 132-residue polypeptide: Seminal vesicle protein SVP-2 (132 aa).

The signal sequence occupies residues 1–14 (HLALLLILENQASG). Basic and acidic residues predominate over residues 33–81 (HKEEVEESESSRGQDFDKRRFWEKDDPTGEHVSVRHEHLEKSHIRFKED). 2 disordered regions span residues 33 to 104 (HKEE…LKRH) and 113 to 132 (VEDQ…MQRV). Positions 104–132 (HDAMEELVSVEDQALANGADPGKSNMQRV) are excised as a propeptide.

To the SVP-1/-3/-4 precursor, particularly in regions where protein processing must occur.

Its subcellular location is the secreted. The polypeptide is Seminal vesicle protein SVP-2 (Cavia porcellus (Guinea pig)).